Consider the following 1152-residue polypeptide: Alpha-mannosidase 2x (1152 aa).

At 1-5 (MKLKK) the chain is on the cytoplasmic side. The chain crosses the membrane as a helical; Signal-anchor for type II membrane protein span at residues 6–26 (QVTVCGAAIFCVAVFSLYLML). Residues 27-796 (DRVQHDPARH…VDEEQEQQME (770 aa)) are Lumenal-facing. Residues 43-74 (PRSQISVLQNRIEQLEQLLEENHDIISRIKDS) adopt a coiled-coil conformation. Histidine 175 and aspartate 177 together coordinate Zn(2+). Asparagine 225 is a glycosylation site (N-linked (GlcNAc...) asparagine). Aspartate 289 is a binding site for Zn(2+). Aspartate 289 serves as the catalytic Nucleophile. An N-linked (GlcNAc...) asparagine glycan is attached at asparagine 305. A Zn(2+)-binding site is contributed by histidine 569.

Belongs to the glycosyl hydrolase 38 family. As to quaternary structure, homodimer; disulfide-linked. Interacts with MGAT4D. Zn(2+) serves as cofactor.

Its subcellular location is the golgi apparatus membrane. The enzyme catalyses N(4)-{beta-D-GlcNAc-(1-&gt;2)-alpha-D-Man-(1-&gt;3)-[alpha-D-Man-(1-&gt;3)-[alpha-D-Man-(1-&gt;6)]-alpha-D-Man-(1-&gt;6)]-beta-D-Man-(1-&gt;4)-beta-D-GlcNAc-(1-&gt;4)-beta-D-GlcNAc}-L-asparaginyl-[protein] + 2 H2O = 2 alpha-D-mannopyranose + an N(4)-{beta-D-GlcNAc-(1-&gt;2)-alpha-D-Man-(1-&gt;3)-[alpha-D-Man-(1-&gt;6)]-beta-D-Man-(1-&gt;4)-beta-D-GlcNAc-(1-&gt;4)-beta-D-GlcNAc}-L-asparaginyl-[protein]. It functions in the pathway protein modification; protein glycosylation. Its function is as follows. Catalyzes the first committed step in the biosynthesis of complex N-glycans. It controls conversion of high mannose to complex N-glycans; the final hydrolytic step in the N-glycan maturation pathway. In Mus musculus (Mouse), this protein is Alpha-mannosidase 2x (Man2a2).